The following is a 299-amino-acid chain: Pyridoxal 5'-phosphate synthase subunit PdxS (299 aa).

Asp-24 provides a ligand contact to D-ribose 5-phosphate. Catalysis depends on Lys-81, which acts as the Schiff-base intermediate with D-ribose 5-phosphate. Residue Gly-153 participates in D-ribose 5-phosphate binding. Arg-165 contacts D-glyceraldehyde 3-phosphate. D-ribose 5-phosphate-binding positions include Gly-219 and 240–241 (GS).

It belongs to the PdxS/SNZ family. In the presence of PdxT, forms a dodecamer of heterodimers.

It catalyses the reaction aldehydo-D-ribose 5-phosphate + D-glyceraldehyde 3-phosphate + L-glutamine = pyridoxal 5'-phosphate + L-glutamate + phosphate + 3 H2O + H(+). It functions in the pathway cofactor biosynthesis; pyridoxal 5'-phosphate biosynthesis. Its function is as follows. Catalyzes the formation of pyridoxal 5'-phosphate from ribose 5-phosphate (RBP), glyceraldehyde 3-phosphate (G3P) and ammonia. The ammonia is provided by the PdxT subunit. Can also use ribulose 5-phosphate and dihydroxyacetone phosphate as substrates, resulting from enzyme-catalyzed isomerization of RBP and G3P, respectively. In Methanococcus aeolicus (strain ATCC BAA-1280 / DSM 17508 / OCM 812 / Nankai-3), this protein is Pyridoxal 5'-phosphate synthase subunit PdxS.